Consider the following 473-residue polypeptide: Ribulose bisphosphate carboxylase large chain (473 aa).

Lys-8 is modified (N6,N6,N6-trimethyllysine). Residues Asn-117 and Thr-167 each contribute to the substrate site. Residue Lys-169 is the Proton acceptor of the active site. Lys-171 is a binding site for substrate. Mg(2+) is bound by residues Lys-195, Asp-197, and Glu-198. Residue Lys-195 is modified to N6-carboxylysine. Catalysis depends on His-288, which acts as the Proton acceptor. Positions 289, 321, and 373 each coordinate substrate.

This sequence belongs to the RuBisCO large chain family. Type I subfamily. In terms of assembly, heterohexadecamer of 8 large chains and 8 small chains; disulfide-linked. The disulfide link is formed within the large subunit homodimers. The cofactor is Mg(2+). The disulfide bond which can form in the large chain dimeric partners within the hexadecamer appears to be associated with oxidative stress and protein turnover.

It is found in the plastid. It localises to the chloroplast. The enzyme catalyses 2 (2R)-3-phosphoglycerate + 2 H(+) = D-ribulose 1,5-bisphosphate + CO2 + H2O. It carries out the reaction D-ribulose 1,5-bisphosphate + O2 = 2-phosphoglycolate + (2R)-3-phosphoglycerate + 2 H(+). Functionally, ruBisCO catalyzes two reactions: the carboxylation of D-ribulose 1,5-bisphosphate, the primary event in carbon dioxide fixation, as well as the oxidative fragmentation of the pentose substrate in the photorespiration process. Both reactions occur simultaneously and in competition at the same active site. The chain is Ribulose bisphosphate carboxylase large chain from Amorphophallus titanum (Titan arum).